A 428-amino-acid polypeptide reads, in one-letter code: Serine--tRNA ligase (428 aa).

Thr-231 to Glu-233 serves as a coordination point for L-serine. Arg-262–Glu-264 is an ATP binding site. L-serine is bound at residue Glu-285. Residue Glu-349–Ser-352 participates in ATP binding. Ser-385 provides a ligand contact to L-serine.

It belongs to the class-II aminoacyl-tRNA synthetase family. Type-1 seryl-tRNA synthetase subfamily. As to quaternary structure, homodimer. The tRNA molecule binds across the dimer.

It localises to the cytoplasm. It catalyses the reaction tRNA(Ser) + L-serine + ATP = L-seryl-tRNA(Ser) + AMP + diphosphate + H(+). It carries out the reaction tRNA(Sec) + L-serine + ATP = L-seryl-tRNA(Sec) + AMP + diphosphate + H(+). Its pathway is aminoacyl-tRNA biosynthesis; selenocysteinyl-tRNA(Sec) biosynthesis; L-seryl-tRNA(Sec) from L-serine and tRNA(Sec): step 1/1. Its function is as follows. Catalyzes the attachment of serine to tRNA(Ser). Is also able to aminoacylate tRNA(Sec) with serine, to form the misacylated tRNA L-seryl-tRNA(Sec), which will be further converted into selenocysteinyl-tRNA(Sec). This Staphylococcus aureus (strain MW2) protein is Serine--tRNA ligase.